The following is a 311-amino-acid chain: Pyrimidine-specific ribonucleoside hydrolase RihA (311 aa).

The active site involves His-240.

This sequence belongs to the IUNH family. RihA subfamily.

Functionally, hydrolyzes cytidine or uridine to ribose and cytosine or uracil, respectively. In Klebsiella pneumoniae (strain 342), this protein is Pyrimidine-specific ribonucleoside hydrolase RihA.